The chain runs to 447 residues: Phosphoglucosamine mutase (447 aa).

The active-site Phosphoserine intermediate is the serine 100. Mg(2+) contacts are provided by serine 100, aspartate 240, aspartate 242, and aspartate 244. At serine 100 the chain carries Phosphoserine.

Belongs to the phosphohexose mutase family. Mg(2+) is required as a cofactor. Activated by phosphorylation.

It catalyses the reaction alpha-D-glucosamine 1-phosphate = D-glucosamine 6-phosphate. Catalyzes the conversion of glucosamine-6-phosphate to glucosamine-1-phosphate. This is Phosphoglucosamine mutase from Clostridium botulinum (strain Alaska E43 / Type E3).